A 262-amino-acid chain; its full sequence is Transmembrane protein 106A (262 aa).

Residues 95 to 115 (FVFLAVLICLVTSSFIVFFLF) form a helical membrane-spanning segment.

This sequence belongs to the TMEM106 family. As to expression, expressed in renal cells (at protein level). Expressed in epithelial cells.

The protein resides in the cell membrane. Activates macrophages and polarizes them into M1-like macrophages through the activation of the MAPK and NF-kappaB signaling pathway. Upon activation, up-regulates the expression of CD80, CD86, CD69 and MHC II on macrophages, and induces the release of pro-inflammatory cytokines such as TNF, IL1B, IL6, CCL2 and nitric oxide. May play a role in inhibition of proliferation and migration. This is Transmembrane protein 106A (TMEM106A) from Homo sapiens (Human).